A 289-amino-acid polypeptide reads, in one-letter code: Eukaryotic translation initiation factor 3 subunit G (289 aa).

2 disordered regions span residues 1-31 and 151-199; these read MSRLANSAGDWADDEEFDEAASLPPQQVISN and DTMA…GEKM. The RRM domain maps to 209–287; that stretch reads ATLRVTNVSE…LILRVEFAKK (79 aa).

Belongs to the eIF-3 subunit G family. In terms of assembly, component of the eukaryotic translation initiation factor 3 (eIF-3) complex.

The protein localises to the cytoplasm. Its function is as follows. RNA-binding component of the eukaryotic translation initiation factor 3 (eIF-3) complex, which is involved in protein synthesis of a specialized repertoire of mRNAs and, together with other initiation factors, stimulates binding of mRNA and methionyl-tRNAi to the 40S ribosome. The eIF-3 complex specifically targets and initiates translation of a subset of mRNAs involved in cell proliferation. This subunit can bind 18S rRNA. This is Eukaryotic translation initiation factor 3 subunit G from Coccidioides immitis (strain RS) (Valley fever fungus).